The chain runs to 436 residues: Nucleolar protein 4-like (436 aa).

Residues 1–184 form a disordered region; sequence MSDSTWMSAD…KMNDSEGMDP (184 aa). Positions 41-61 are enriched in low complexity; sequence SESGSGNGSSTLNPSTSSSTQ. Residue serine 130 is modified to Phosphoserine. Residues 160–169 are compositionally biased toward acidic residues; sequence ADDDDDDHDD. A compositionally biased stretch (basic and acidic residues) spans 170 to 184; sequence HEDNDKMNDSEGMDP. A Phosphoserine modification is found at serine 295. The segment covering 351-366 has biased composition (polar residues); that stretch reads QPPASLQTGNHSNGPT. The interval 351 to 400 is disordered; it reads QPPASLQTGNHSNGPTDLSMKGGASTTSTTPTPTPSSTSTSRPVPTAQLS. A compositionally biased stretch (low complexity) spans 375-396; the sequence is STTSTTPTPTPSSTSTSRPVPT.

This Homo sapiens (Human) protein is Nucleolar protein 4-like (NOL4L).